Consider the following 387-residue polypeptide: Acetate kinase (387 aa).

Position 14 (asparagine 14) interacts with Mg(2+). Lysine 21 lines the ATP pocket. Position 80 (arginine 80) interacts with substrate. Catalysis depends on aspartate 137, which acts as the Proton donor/acceptor. Residues 197–201, 271–273, and 319–323 contribute to the ATP site; these read HLGNG, DFR, and GIGEN. Glutamate 373 lines the Mg(2+) pocket.

This sequence belongs to the acetokinase family. In terms of assembly, homodimer. Mg(2+) serves as cofactor. It depends on Mn(2+) as a cofactor.

The protein resides in the cytoplasm. The catalysed reaction is acetate + ATP = acetyl phosphate + ADP. It functions in the pathway metabolic intermediate biosynthesis; acetyl-CoA biosynthesis; acetyl-CoA from acetate: step 1/2. Catalyzes the formation of acetyl phosphate from acetate and ATP. Can also catalyze the reverse reaction. The sequence is that of Acetate kinase from Mycobacterium avium (strain 104).